The primary structure comprises 39 residues: SGSKTAKIGDGCFGVRLDRIGSTSGMGCGGVPKPTPGGS.

The propeptide occupies 1–8; the sequence is SGSKTAKI. A disulfide bridge connects residues Cys-12 and Cys-28.

Belongs to the natriuretic peptide family. Expressed by the venom gland.

It is found in the secreted. In terms of biological role, snake venom natriuretic peptide that targets both NPR1 and NPR2. Exhibits hypotensive and vasodepressor activities. The chain is Natriuretic peptide HsNP-a from Hoplocephalus stephensii (Stephens's banded snake).